The sequence spans 427 residues: Trigger factor (427 aa).

A PPIase FKBP-type domain is found at 163-248; it reads GDTVVIDFVG…VNEVKAKELP (86 aa).

The protein belongs to the FKBP-type PPIase family. Tig subfamily.

It is found in the cytoplasm. The enzyme catalyses [protein]-peptidylproline (omega=180) = [protein]-peptidylproline (omega=0). In terms of biological role, involved in protein export. Acts as a chaperone by maintaining the newly synthesized protein in an open conformation. Functions as a peptidyl-prolyl cis-trans isomerase. This is Trigger factor from Lactococcus lactis subsp. cremoris (strain MG1363).